A 519-amino-acid chain; its full sequence is T-complex protein 1 subunit gamma (519 aa).

It belongs to the TCP-1 chaperonin family. Component of the T-complex protein 1 (TCP1) complex.

The protein resides in the cytoplasm. Its function is as follows. Molecular chaperone; assists the folding of proteins upon ATP hydrolysis. The chain is T-complex protein 1 subunit gamma (CCT3) from Encephalitozoon cuniculi (strain GB-M1) (Microsporidian parasite).